The sequence spans 324 residues: Beta-ketoacyl-[acyl-carrier-protein] synthase III (324 aa).

Catalysis depends on residues Cys112 and His249. An ACP-binding region spans residues 250–254 (QANRR). The active site involves Asn279.

The protein belongs to the thiolase-like superfamily. FabH family. As to quaternary structure, homodimer.

Its subcellular location is the cytoplasm. It carries out the reaction malonyl-[ACP] + acetyl-CoA + H(+) = 3-oxobutanoyl-[ACP] + CO2 + CoA. It functions in the pathway lipid metabolism; fatty acid biosynthesis. Its function is as follows. Catalyzes the condensation reaction of fatty acid synthesis by the addition to an acyl acceptor of two carbons from malonyl-ACP. Catalyzes the first condensation reaction which initiates fatty acid synthesis and may therefore play a role in governing the total rate of fatty acid production. Possesses both acetoacetyl-ACP synthase and acetyl transacylase activities. Its substrate specificity determines the biosynthesis of branched-chain and/or straight-chain of fatty acids. The protein is Beta-ketoacyl-[acyl-carrier-protein] synthase III of Streptococcus equi subsp. zooepidemicus (strain H70).